A 545-amino-acid chain; its full sequence is Threonine--tRNA ligase catalytic subunit (545 aa).

The catalytic stretch occupies residues 139–433 (DHRLIGEKLD…LLEHFKGKLP (295 aa)). Residues Cys231, His282, and His410 each contribute to the Zn(2+) site.

Belongs to the class-II aminoacyl-tRNA synthetase family. Homodimer. Probably interacts with its editing subunit. It depends on Zn(2+) as a cofactor.

Its subcellular location is the cytoplasm. The enzyme catalyses tRNA(Thr) + L-threonine + ATP = L-threonyl-tRNA(Thr) + AMP + diphosphate + H(+). In terms of biological role, catalyzes the attachment of threonine to tRNA(Thr) in a two-step reaction: L-threonine is first activated by ATP to form Thr-AMP and then transferred to the acceptor end of tRNA(Thr). Also activates L-serine and transfers it to tRNA(Thr) but cannot deacylate incorrectly charged amino acid; unlike most archaea the editing function is found in a freestanding protein. The sequence is that of Threonine--tRNA ligase catalytic subunit from Saccharolobus islandicus (strain M.16.27) (Sulfolobus islandicus).